The chain runs to 388 residues: Phosphoribosylformylglycinamidine cyclo-ligase, chloroplastic/mitochondrial (388 aa).

This sequence belongs to the AIR synthase family.

The protein localises to the plastid. The protein resides in the chloroplast. Its subcellular location is the mitochondrion. The catalysed reaction is 2-formamido-N(1)-(5-O-phospho-beta-D-ribosyl)acetamidine + ATP = 5-amino-1-(5-phospho-beta-D-ribosyl)imidazole + ADP + phosphate + H(+). Its pathway is purine metabolism; IMP biosynthesis via de novo pathway; 5-amino-1-(5-phospho-D-ribosyl)imidazole from N(2)-formyl-N(1)-(5-phospho-D-ribosyl)glycinamide: step 2/2. In Vigna unguiculata (Cowpea), this protein is Phosphoribosylformylglycinamidine cyclo-ligase, chloroplastic/mitochondrial (PUR5).